We begin with the raw amino-acid sequence, 442 residues long: Methionine aminopeptidase 2-1 (442 aa).

Residues 1-92 (MAAQASEELE…ISELFPNNQY (92 aa)) are disordered. The segment covering 15-25 (NGQNGHAQEQV) has biased composition (polar residues). A compositionally biased stretch (acidic residues) spans 30 to 47 (EAADNDDSEDDEKEEEGG). Over residues 56-72 (AKKKKKRKPKKKKKGGA) the composition is skewed to basic residues. Histidine 195 lines the substrate pocket. Aspartate 215, aspartate 226, and histidine 295 together coordinate a divalent metal cation. Histidine 303 is a substrate binding site. Positions 328 and 423 each coordinate a divalent metal cation.

This sequence belongs to the peptidase M24A family. Methionine aminopeptidase eukaryotic type 2 subfamily. Requires Co(2+) as cofactor. It depends on Zn(2+) as a cofactor. Mn(2+) serves as cofactor. Fe(2+) is required as a cofactor.

The protein resides in the cytoplasm. The enzyme catalyses Release of N-terminal amino acids, preferentially methionine, from peptides and arylamides.. Its function is as follows. Cotranslationally removes the N-terminal methionine from nascent proteins. The N-terminal methionine is often cleaved when the second residue in the primary sequence is small and uncharged (Met-Ala-, Cys, Gly, Pro, Ser, Thr, or Val). In Talaromyces marneffei (strain ATCC 18224 / CBS 334.59 / QM 7333) (Penicillium marneffei), this protein is Methionine aminopeptidase 2-1.